The chain runs to 422 residues: Phytoene synthase, chloroplastic (422 aa).

Residues 1-83 constitute a chloroplast transit peptide; it reads MSLASSLVVS…GSVIVASMVA (83 aa).

Belongs to the phytoene/squalene synthase family. As to quaternary structure, monomer.

The protein resides in the plastid. It localises to the chloroplast. It carries out the reaction 2 (2E,6E,10E)-geranylgeranyl diphosphate = 15-cis-phytoene + 2 diphosphate. The protein operates within carotenoid biosynthesis; phytoene biosynthesis; all-trans-phytoene from geranylgeranyl diphosphate: step 1/1. Its function is as follows. Catalyzes the reaction from prephytoene diphosphate to phytoene. The sequence is that of Phytoene synthase, chloroplastic (PSY) from Cucumis melo (Muskmelon).